Consider the following 550-residue polypeptide: ATP synthase subunit alpha (550 aa).

172-179 (GDRKTGKT) serves as a coordination point for ATP. Positions 514-550 (EDEQRVNEPPAKPLAGEENRETVTRFRDGTTDRPAES) are disordered. Residues 528-550 (AGEENRETVTRFRDGTTDRPAES) are compositionally biased toward basic and acidic residues.

Belongs to the ATPase alpha/beta chains family. F-type ATPases have 2 components, CF(1) - the catalytic core - and CF(0) - the membrane proton channel. CF(1) has five subunits: alpha(3), beta(3), gamma(1), delta(1), epsilon(1). CF(0) has three main subunits: a(1), b(2) and c(9-12). The alpha and beta chains form an alternating ring which encloses part of the gamma chain. CF(1) is attached to CF(0) by a central stalk formed by the gamma and epsilon chains, while a peripheral stalk is formed by the delta and b chains.

The protein localises to the cell membrane. The catalysed reaction is ATP + H2O + 4 H(+)(in) = ADP + phosphate + 5 H(+)(out). Produces ATP from ADP in the presence of a proton gradient across the membrane. The alpha chain is a regulatory subunit. This Salinispora arenicola (strain CNS-205) protein is ATP synthase subunit alpha.